A 337-amino-acid chain; its full sequence is Anthranilate phosphoribosyltransferase (337 aa).

5-phospho-alpha-D-ribose 1-diphosphate-binding positions include Gly82, 85–86 (GD), Thr90, 92–95 (NIST), 110–118 (KHGGRSVSS), and Ser122. Position 82 (Gly82) interacts with anthranilate. Position 94 (Ser94) interacts with Mg(2+). Arg168 lines the anthranilate pocket. Mg(2+) is bound by residues Asp226 and Glu227.

It belongs to the anthranilate phosphoribosyltransferase family. Homodimer. It depends on Mg(2+) as a cofactor.

It catalyses the reaction N-(5-phospho-beta-D-ribosyl)anthranilate + diphosphate = 5-phospho-alpha-D-ribose 1-diphosphate + anthranilate. Its pathway is amino-acid biosynthesis; L-tryptophan biosynthesis; L-tryptophan from chorismate: step 2/5. In terms of biological role, catalyzes the transfer of the phosphoribosyl group of 5-phosphorylribose-1-pyrophosphate (PRPP) to anthranilate to yield N-(5'-phosphoribosyl)-anthranilate (PRA). This chain is Anthranilate phosphoribosyltransferase, found in Francisella tularensis subsp. tularensis (strain WY96-3418).